The sequence spans 658 residues: MPLFDLKSPYPPAGDQPQAIEALTKSLKNNNHYQTLVGVTGSGKTYTMANIIAQTNKPALIMSHNKTLCAQLYSEFKAFFPHNRVEYFISHFDYYQPESYIPRRDLFIEKDSSINDDLERLRLSATTSLLGYDDVIVIASVSANYGLGNPEEYLKVMEKIKVGEKRAYKSFLLKLVEMGYSRNEVVFDRGSFRATGECVDIFPAYNDAEFIRIEFFGDEIERIAVFDALEKNEIKRLDSVMLYAASQFAVGSERLNLAIKSIEDELALRLKFFKEQDKMLEYNRLKQRTEHDLEMISATGVCKGIENYARHFTGKAPNETPFCLFDYLGIFEREFLVIVDESHVSLPQFGGMYAGDMSRKSVLVEYGFRLPSALDNRPLKFDEFIHKNCQFLFVSATPNKLELELSKKNVAEQIIRPTGLLDPKFEVRDSDKQVQDLFDEIKLVVARGERVLITTLTKKMAEELCKYYAEWGLKARYMHSEIDAIERNHIIRSLRLKEFDILIGINLLREGLDLPEVSLVAIMDADKEGFLRSETSLIQTMGRAARNANGKVLLYAKKITQSMQKAFEITSYRRAKQEEFNKIHNITPKTVTRALEEELKLRDDEIRIAKALKKDKMPKSEREKIIKELDKKMRECTKNLDFEEAMRLRDEIAQLRTL.

Residues 25-414 (KSLKNNNHYQ…LSKKNVAEQI (390 aa)) form the Helicase ATP-binding domain. 38 to 45 (GVTGSGKT) contributes to the ATP binding site. Residues 91-114 (HFDYYQPESYIPRRDLFIEKDSSI) carry the Beta-hairpin motif. The Helicase C-terminal domain occupies 433 to 607 (QVQDLFDEIK…ELKLRDDEIR (175 aa)). One can recognise a UVR domain in the interval 623 to 658 (EKIIKELDKKMRECTKNLDFEEAMRLRDEIAQLRTL).

It belongs to the UvrB family. Forms a heterotetramer with UvrA during the search for lesions. Interacts with UvrC in an incision complex.

The protein resides in the cytoplasm. Functionally, the UvrABC repair system catalyzes the recognition and processing of DNA lesions. A damage recognition complex composed of 2 UvrA and 2 UvrB subunits scans DNA for abnormalities. Upon binding of the UvrA(2)B(2) complex to a putative damaged site, the DNA wraps around one UvrB monomer. DNA wrap is dependent on ATP binding by UvrB and probably causes local melting of the DNA helix, facilitating insertion of UvrB beta-hairpin between the DNA strands. Then UvrB probes one DNA strand for the presence of a lesion. If a lesion is found the UvrA subunits dissociate and the UvrB-DNA preincision complex is formed. This complex is subsequently bound by UvrC and the second UvrB is released. If no lesion is found, the DNA wraps around the other UvrB subunit that will check the other stand for damage. In Helicobacter pylori (strain ATCC 700392 / 26695) (Campylobacter pylori), this protein is UvrABC system protein B.